A 141-amino-acid polypeptide reads, in one-letter code: MSIIISKTVKQELPEEKIRKAIELVLQGEKCEAEEISAVYCGDRLIRKINIEHLAHDYPTDTISFRLNSGNAIEGEFYISCDTVRRNAQEYESSFENELLRVTIHSVLHLIGFEDQSAAQKAEMTQKENRYLAALFHHDEK.

Residues histidine 105, histidine 109, and aspartate 115 each coordinate Zn(2+).

This sequence belongs to the endoribonuclease YbeY family. Zn(2+) is required as a cofactor.

It is found in the cytoplasm. Single strand-specific metallo-endoribonuclease involved in late-stage 70S ribosome quality control and in maturation of the 3' terminus of the 16S rRNA. The sequence is that of Endoribonuclease YbeY from Chloroherpeton thalassium (strain ATCC 35110 / GB-78).